The sequence spans 264 residues: MNTLFNTVNFWRYNSSPLTQFEIKDLISIDTPILGNLHISITNIGFYLTMGAFFLLIINLLSTNYNKLIGNSWSISQESLYATLHSIVVNQINPKNGQIYFPFIYALFIFILINNLIGMVPYSFASTSHFVLTFALSFTIVLGATILGFQKHGLEFFSLLVPAGCPLGLLPLLVLIEFISYLARNISLGLRLAANILSGHMLLHILAGFTYNIMTSGIIFFFLGLIPLAFIIAFSGLELGIAFIQAQVFVVLTSGYIKDALDLH.

A run of 7 helical transmembrane segments spans residues 41 to 61 (ITNIGFYLTMGAFFLLIINLL), 99 to 119 (IYFPFIYALFIFILINNLIGM), 129 to 149 (HFVLTFALSFTIVLGATILGF), 156 to 176 (FFSLLVPAGCPLGLLPLLVLI), 194 to 214 (ANILSGHMLLHILAGFTYNIM), 217 to 237 (GIIFFFLGLIPLAFIIAFSGL), and 238 to 258 (ELGIAFIQAQVFVVLTSGYIK).

Belongs to the ATPase A chain family. As to quaternary structure, F-type ATPases have 2 components, CF(1) - the catalytic core - and CF(0) - the membrane proton channel. CF(1) has five subunits: alpha(3), beta(3), gamma(1), delta(1), epsilon(1). CF(0) has three main subunits: a, b and c.

The protein resides in the mitochondrion inner membrane. In terms of biological role, mitochondrial membrane ATP synthase (F(1)F(0) ATP synthase or Complex V) produces ATP from ADP in the presence of a proton gradient across the membrane which is generated by electron transport complexes of the respiratory chain. F-type ATPases consist of two structural domains, F(1) - containing the extramembraneous catalytic core and F(0) - containing the membrane proton channel, linked together by a central stalk and a peripheral stalk. During catalysis, ATP synthesis in the catalytic domain of F(1) is coupled via a rotary mechanism of the central stalk subunits to proton translocation. Key component of the proton channel; it may play a direct role in the translocation of protons across the membrane. The polypeptide is ATP synthase subunit a (ATP6) (Podospora anserina (strain S / ATCC MYA-4624 / DSM 980 / FGSC 10383) (Pleurage anserina)).